Reading from the N-terminus, the 429-residue chain is ATP-dependent Clp protease ATP-binding subunit ClpX (429 aa).

The ClpX-type ZB domain occupies 1–54 (MARSKSQKIEGCSFCGRTRAEAEGKIISAKSVAICFECSKICHNLFKEESDKPA). Residues Cys-12, Cys-15, Cys-35, and Cys-38 each contribute to the Zn(2+) site. 119-126 (PTGSGKTL) is an ATP binding site.

The protein belongs to the ClpX chaperone family. In terms of assembly, component of the ClpX-ClpP complex. Forms a hexameric ring that, in the presence of ATP, binds to fourteen ClpP subunits assembled into a disk-like structure with a central cavity, resembling the structure of eukaryotic proteasomes.

Its function is as follows. ATP-dependent specificity component of the Clp protease. It directs the protease to specific substrates. Can perform chaperone functions in the absence of ClpP. This is ATP-dependent Clp protease ATP-binding subunit ClpX from Borrelia duttonii (strain Ly).